We begin with the raw amino-acid sequence, 52 residues long: NADH dehydrogenase [ubiquinone] 1 alpha subcomplex subunit 4 homolog (52 aa).

Residues 14–30 (LYPLGAAVATAVGFATY) form a helical membrane-spanning segment.

This sequence belongs to the complex I NDUFA4 subunit family.

The protein localises to the mitochondrion inner membrane. Functionally, accessory subunit of the mitochondrial membrane respiratory chain NADH dehydrogenase (Complex I), that is believed to be not involved in catalysis. Complex I functions in the transfer of electrons from NADH to the respiratory chain. The immediate electron acceptor for the enzyme is believed to be ubiquinone. The chain is NADH dehydrogenase [ubiquinone] 1 alpha subcomplex subunit 4 homolog from Schizosaccharomyces pombe (strain 972 / ATCC 24843) (Fission yeast).